We begin with the raw amino-acid sequence, 142 residues long: MAAAAEGVLATRSDEPARDDAAVETAEEAKEPAEADITELCRDMFSKMATYLTGELTATSEDYKLLENMNKLTSLKYLEMKDIAINISRNLKDLNQKYAGLQPYLDQINVIEEQVAALEQAAYKLDAYSKKLEAKYKKLEKR.

Residues 1–33 (MAAAAEGVLATRSDEPARDDAAVETAEEAKEPA) are disordered. Ala2 carries the post-translational modification N-acetylalanine. Residues 12 to 33 (RSDEPARDDAAVETAEEAKEPA) show a composition bias toward basic and acidic residues. Residues 79-127 (EMKDIAINISRNLKDLNQKYAGLQPYLDQINVIEEQVAALEQAAYKLDA) are a coiled coil.

Belongs to the BLOC1S2 family. As to quaternary structure, component of the biogenesis of lysosome-related organelles complex 1 (BLOC-1) composed of BLOC1S1, BLOC1S2, BLOC1S3, BLOC1S4, BLOC1S5, BLOC1S6, DTNBP1/BLOC1S7 and SNAPIN/BLOC1S8. Octamer composed of one copy each BLOC1S1, BLOC1S2, BLOC1S3, BLOC1S4, BLOC1S5, BLOC1S6, DTNBP1/BLOC1S7 and SNAPIN/BLOC1S8. Interacts directly with BLOC1S1, BLOC1S3, BLOC1S4, BLOC1S5 and SNAPIN. The BLOC-1 complex associates with the AP-3 protein complex and membrane protein cargos. Component of the BLOC-one-related complex (BORC) which is composed of BLOC1S1, BLOC1S2, BORCS5, BORCS6, BORCS7, BORCS8, KXD1 and SNAPIN. Interacts with gamma-tubulin. Interacts with IFT57. In terms of tissue distribution, isoform 1 and isoform 2 are widely expressed. Expressed in various malignant tumor tissues (at protein level).

Its subcellular location is the cytoplasm. The protein resides in the cytoskeleton. It localises to the microtubule organizing center. It is found in the centrosome. The protein localises to the lysosome membrane. Component of the BLOC-1 complex, a complex that is required for normal biogenesis of lysosome-related organelles (LRO), such as platelet dense granules and melanosomes. In concert with the AP-3 complex, the BLOC-1 complex is required to target membrane protein cargos into vesicles assembled at cell bodies for delivery into neurites and nerve terminals. The BLOC-1 complex, in association with SNARE proteins, is also proposed to be involved in neurite extension. As part of the BORC complex may play a role in lysosomes movement and localization at the cell periphery. Associated with the cytosolic face of lysosomes, the BORC complex may recruit ARL8B and couple lysosomes to microtubule plus-end-directed kinesin motor. May play a role in cell proliferation. The sequence is that of Biogenesis of lysosome-related organelles complex 1 subunit 2 (BLOC1S2) from Homo sapiens (Human).